The following is a 634-amino-acid chain: DNA-directed RNA polymerase subunit gamma (634 aa).

Positions 74, 76, 89, and 92 each coordinate Zn(2+). Residues Asp471, Asp473, and Asp475 each contribute to the Mg(2+) site.

Belongs to the RNA polymerase beta' chain family. RpoC1 subfamily. As to quaternary structure, in cyanobacteria the RNAP catalytic core is composed of 2 alpha, 1 beta, 1 beta', 1 gamma and 1 omega subunit. When a sigma factor is associated with the core the holoenzyme is formed, which can initiate transcription. It depends on Mg(2+) as a cofactor. The cofactor is Zn(2+).

The catalysed reaction is RNA(n) + a ribonucleoside 5'-triphosphate = RNA(n+1) + diphosphate. DNA-dependent RNA polymerase catalyzes the transcription of DNA into RNA using the four ribonucleoside triphosphates as substrates. The polypeptide is DNA-directed RNA polymerase subunit gamma (Prochlorococcus marinus (strain MIT 9215)).